The sequence spans 346 residues: 4-hydroxy-2-oxovalerate aldolase 2 (346 aa).

Positions 8 to 258 (VTLVDTTLRD…HTGVELFPLI (251 aa)) constitute a Pyruvate carboxyltransferase domain. Residues 16–17 (RD), S170, and H197 each bind substrate. Residue D17 participates in Mn(2+) binding. Mn(2+)-binding residues include H197 and H199. A substrate-binding site is contributed by Y288.

This sequence belongs to the 4-hydroxy-2-oxovalerate aldolase family.

It carries out the reaction (S)-4-hydroxy-2-oxopentanoate = acetaldehyde + pyruvate. The polypeptide is 4-hydroxy-2-oxovalerate aldolase 2 (Nocardia farcinica (strain IFM 10152)).